The chain runs to 462 residues: Stabilizer of axonemal microtubules 1 (462 aa).

Mn regions lie at residues 30 to 64, 65 to 97, 98 to 131, 132 to 165, 166 to 199, 200 to 232, 233 to 266, 267 to 299, 300 to 332, 333 to 366, 367 to 400, and 401 to 434; these read KPCF…KVNI, PMEG…PIQD, EMDF…QCND, KMEC…PASC, RFDH…LCNI, PLES…PSEV, PFDS…GLDI, PFPS…PPEG, KMDL…KKSD, RFES…FSDE, PMEY…RVNI, and PLEG…IFDE.

It belongs to the FAM154 family. In terms of assembly, associates with microtubules via the Mn regions.

The protein localises to the cytoplasm. The protein resides in the cytoskeleton. Its subcellular location is the microtubule organizing center. It localises to the centrosome. It is found in the centriole. The protein localises to the cilium basal body. The protein resides in the cilium axoneme. May play a role in the regulation of cilium length. Stabilizes microtubules at low temperature. This is Stabilizer of axonemal microtubules 1 (Saxo1) from Rattus norvegicus (Rat).